The sequence spans 493 residues: Guanosine-5'-triphosphate,3'-diphosphate pyrophosphatase (493 aa).

Belongs to the GppA/Ppx family. GppA subfamily.

The catalysed reaction is guanosine 3'-diphosphate 5'-triphosphate + H2O = guanosine 3',5'-bis(diphosphate) + phosphate + H(+). Its pathway is purine metabolism; ppGpp biosynthesis; ppGpp from GTP: step 2/2. In terms of biological role, catalyzes the conversion of pppGpp to ppGpp. Guanosine pentaphosphate (pppGpp) is a cytoplasmic signaling molecule which together with ppGpp controls the 'stringent response', an adaptive process that allows bacteria to respond to amino acid starvation, resulting in the coordinated regulation of numerous cellular activities. The sequence is that of Guanosine-5'-triphosphate,3'-diphosphate pyrophosphatase from Salmonella dublin (strain CT_02021853).